Consider the following 205-residue polypeptide: tRNA (pseudouridine(54)-N(1))-methyltransferase (205 aa).

Residues leucine 136, glycine 156, 179–184 (LSPLEL), and cysteine 189 each bind S-adenosyl-L-methionine.

Belongs to the methyltransferase superfamily. TrmY family. In terms of assembly, homodimer.

The protein localises to the cytoplasm. The enzyme catalyses pseudouridine(54) in tRNA + S-adenosyl-L-methionine = N(1)-methylpseudouridine(54) in tRNA + S-adenosyl-L-homocysteine + H(+). Functionally, specifically catalyzes the N1-methylation of pseudouridine at position 54 (Psi54) in tRNAs. This is tRNA (pseudouridine(54)-N(1))-methyltransferase from Methanocaldococcus jannaschii (strain ATCC 43067 / DSM 2661 / JAL-1 / JCM 10045 / NBRC 100440) (Methanococcus jannaschii).